We begin with the raw amino-acid sequence, 748 residues long: Malate synthase G (748 aa).

Residues Val-141, 148-149 (RF), Ser-298, and Arg-335 contribute to the acetyl-CoA site. Arg-362 serves as the catalytic Proton acceptor. Glyoxylate contacts are provided by residues Arg-362, Glu-453, and 478–481 (GFLD). Mg(2+) is bound by residues Glu-453 and Asp-481. Residue Pro-562 coordinates acetyl-CoA. Position 639 is a cysteine sulfenic acid (-SOH) (Cys-639). Asp-653 functions as the Proton donor in the catalytic mechanism.

Belongs to the malate synthase family. GlcB subfamily. Monomer. Mg(2+) is required as a cofactor.

It localises to the cytoplasm. The enzyme catalyses glyoxylate + acetyl-CoA + H2O = (S)-malate + CoA + H(+). It participates in carbohydrate metabolism; glyoxylate cycle; (S)-malate from isocitrate: step 2/2. Its function is as follows. Involved in the glycolate utilization. Catalyzes the condensation and subsequent hydrolysis of acetyl-coenzyme A (acetyl-CoA) and glyoxylate to form malate and CoA. The protein is Malate synthase G of Corynebacterium efficiens (strain DSM 44549 / YS-314 / AJ 12310 / JCM 11189 / NBRC 100395).